Here is a 146-residue protein sequence, read N- to C-terminus: Holo-[acyl-carrier-protein] synthase (146 aa).

Mg(2+)-binding residues include D9 and E63.

The protein belongs to the P-Pant transferase superfamily. AcpS family. Mg(2+) serves as cofactor.

The protein resides in the cytoplasm. It carries out the reaction apo-[ACP] + CoA = holo-[ACP] + adenosine 3',5'-bisphosphate + H(+). Transfers the 4'-phosphopantetheine moiety from coenzyme A to a Ser of acyl-carrier-protein. In Burkholderia multivorans (strain ATCC 17616 / 249), this protein is Holo-[acyl-carrier-protein] synthase.